Reading from the N-terminus, the 225-residue chain is Ribonuclease 3 (225 aa).

The RNase III domain maps to 5–127; sequence IDKLERKIGY…IIGAVYLDSD (123 aa). Mg(2+) is bound at residue glutamate 40. Aspartate 44 is an active-site residue. Mg(2+) is bound by residues aspartate 113 and glutamate 116. Residue glutamate 116 is part of the active site. The DRBM domain maps to 154–224; that stretch reads DPKTRLQEFL…AETALEQLSN (71 aa).

It belongs to the ribonuclease III family. In terms of assembly, homodimer. Requires Mg(2+) as cofactor.

The protein localises to the cytoplasm. It catalyses the reaction Endonucleolytic cleavage to 5'-phosphomonoester.. Digests double-stranded RNA. Involved in the processing of primary rRNA transcript to yield the immediate precursors to the large and small rRNAs (23S and 16S). Processes some mRNAs, and tRNAs when they are encoded in the rRNA operon. Processes pre-crRNA and tracrRNA of type II CRISPR loci if present in the organism. This chain is Ribonuclease 3, found in Vibrio atlanticus (strain LGP32) (Vibrio splendidus (strain Mel32)).